A 356-amino-acid polypeptide reads, in one-letter code: Tyrosine recombinase XerS (356 aa).

Positions 16–121 (LMPWFVLEYY…ALSSLYKYLT (106 aa)) constitute a Core-binding (CB) domain. In terms of domain architecture, Tyr recombinase spans 169 to 354 (KFLDYVENEY…VNDEQKNALD (186 aa)). Catalysis depends on residues Arg210, Lys234, His306, Arg309, and His332. Tyr341 serves as the catalytic O-(3'-phospho-DNA)-tyrosine intermediate.

This sequence belongs to the 'phage' integrase family. XerS subfamily.

It localises to the cytoplasm. With respect to regulation, ftsK is required for recombination. Its function is as follows. Site-specific tyrosine recombinase, which acts by catalyzing the cutting and rejoining of the recombining DNA molecules. Essential to convert dimers of the bacterial chromosome into monomers to permit their segregation at cell division. This is Tyrosine recombinase XerS from Streptococcus thermophilus (strain ATCC BAA-491 / LMD-9).